The following is a 264-amino-acid chain: S-adenosylmethionine decarboxylase proenzyme (264 aa).

Catalysis depends on Ser113, which acts as the Schiff-base intermediate with substrate; via pyruvic acid. Ser113 carries the post-translational modification Pyruvic acid (Ser); by autocatalysis. The Proton acceptor; for processing activity role is filled by His118. Cys141 functions as the Proton donor; for catalytic activity in the catalytic mechanism.

This sequence belongs to the prokaryotic AdoMetDC family. Type 2 subfamily. In terms of assembly, heterooctamer of four alpha and four beta chains arranged as a tetramer of alpha/beta heterodimers. The cofactor is pyruvate. Is synthesized initially as an inactive proenzyme. Formation of the active enzyme involves a self-maturation process in which the active site pyruvoyl group is generated from an internal serine residue via an autocatalytic post-translational modification. Two non-identical subunits are generated from the proenzyme in this reaction, and the pyruvate is formed at the N-terminus of the alpha chain, which is derived from the carboxyl end of the proenzyme. The post-translation cleavage follows an unusual pathway, termed non-hydrolytic serinolysis, in which the side chain hydroxyl group of the serine supplies its oxygen atom to form the C-terminus of the beta chain, while the remainder of the serine residue undergoes an oxidative deamination to produce ammonia and the pyruvoyl group blocking the N-terminus of the alpha chain.

The enzyme catalyses S-adenosyl-L-methionine + H(+) = S-adenosyl 3-(methylsulfanyl)propylamine + CO2. Its pathway is amine and polyamine biosynthesis; S-adenosylmethioninamine biosynthesis; S-adenosylmethioninamine from S-adenosyl-L-methionine: step 1/1. Functionally, catalyzes the decarboxylation of S-adenosylmethionine to S-adenosylmethioninamine (dcAdoMet), the propylamine donor required for the synthesis of the polyamines spermine and spermidine from the diamine putrescine. In Hahella chejuensis (strain KCTC 2396), this protein is S-adenosylmethionine decarboxylase proenzyme.